The primary structure comprises 320 residues: ATP-dependent 6-phosphofructokinase (320 aa).

Residue glycine 12 participates in ATP binding. Residues 22–26 and 55–60 each bind ADP; these read RGVVR and RYSVSD. ATP-binding positions include 73–74 and 103–106; these read RF and GDGS. Mg(2+) is bound at residue aspartate 104. 126-128 is a binding site for substrate; that stretch reads TID. Aspartate 128 acts as the Proton acceptor in catalysis. Arginine 155 is a binding site for ADP. Substrate-binding positions include arginine 163 and 170 to 172; that span reads MGR. Residues 186 to 188, lysine 212, and 214 to 216 each bind ADP; these read GCE and KKH. Substrate is bound by residues glutamate 223, arginine 244, and 250–253; that span reads HIQR.

Belongs to the phosphofructokinase type A (PFKA) family. ATP-dependent PFK group I subfamily. Prokaryotic clade 'B1' sub-subfamily. In terms of assembly, homotetramer. The cofactor is Mg(2+).

It is found in the cytoplasm. It carries out the reaction beta-D-fructose 6-phosphate + ATP = beta-D-fructose 1,6-bisphosphate + ADP + H(+). It functions in the pathway carbohydrate degradation; glycolysis; D-glyceraldehyde 3-phosphate and glycerone phosphate from D-glucose: step 3/4. Allosterically activated by ADP and other diphosphonucleosides, and allosterically inhibited by phosphoenolpyruvate. Catalyzes the phosphorylation of D-fructose 6-phosphate to fructose 1,6-bisphosphate by ATP, the first committing step of glycolysis. The chain is ATP-dependent 6-phosphofructokinase from Buchnera aphidicola subsp. Acyrthosiphon pisum (strain 5A).